Consider the following 651-residue polypeptide: Acetyl-coenzyme A synthetase (651 aa).

Residues 190–193 (RRGK) and Thr-311 each bind CoA. ATP is bound by residues 387-389 (GEP), 411-416 (DTWWQT), Asp-508, and Arg-523. Ser-531 lines the CoA pocket. ATP is bound at residue Arg-534. Positions 545, 547, and 550 each coordinate Mg(2+). Residue Lys-617 is modified to N6-acetyllysine.

The protein belongs to the ATP-dependent AMP-binding enzyme family. Mg(2+) is required as a cofactor. Acetylated. Deacetylation by the SIR2-homolog deacetylase activates the enzyme.

The catalysed reaction is acetate + ATP + CoA = acetyl-CoA + AMP + diphosphate. In terms of biological role, catalyzes the conversion of acetate into acetyl-CoA (AcCoA), an essential intermediate at the junction of anabolic and catabolic pathways. AcsA undergoes a two-step reaction. In the first half reaction, AcsA combines acetate with ATP to form acetyl-adenylate (AcAMP) intermediate. In the second half reaction, it can then transfer the acetyl group from AcAMP to the sulfhydryl group of CoA, forming the product AcCoA. In Mycobacterium bovis (strain ATCC BAA-935 / AF2122/97), this protein is Acetyl-coenzyme A synthetase.